The chain runs to 283 residues: Hydroxyacylglutathione hydrolase-like protein (283 aa).

Zn(2+)-binding residues include His54, His56, Asp58, His59, His110, Asp134, and His173.

Belongs to the metallo-beta-lactamase superfamily. Glyoxalase II family. Zn(2+) is required as a cofactor.

Functionally, hydrolase acting on ester bonds. In Mus musculus (Mouse), this protein is Hydroxyacylglutathione hydrolase-like protein (Haghl).